A 207-amino-acid polypeptide reads, in one-letter code: Urease accessory protein UreG (207 aa).

A GTP-binding site is contributed by 13–20 (GPVGSGKT).

It belongs to the SIMIBI class G3E GTPase family. UreG subfamily. As to quaternary structure, homodimer. UreD, UreF and UreG form a complex that acts as a GTP-hydrolysis-dependent molecular chaperone, activating the urease apoprotein by helping to assemble the nickel containing metallocenter of UreC. The UreE protein probably delivers the nickel.

It localises to the cytoplasm. In terms of biological role, facilitates the functional incorporation of the urease nickel metallocenter. This process requires GTP hydrolysis, probably effectuated by UreG. This chain is Urease accessory protein UreG, found in Azoarcus sp. (strain BH72).